The primary structure comprises 785 residues: Penicillin-binding protein 1A (785 aa).

Over 1–6 (MYKSLF) the chain is Cytoplasmic. The chain crosses the membrane as a helical; Signal-anchor for type II membrane protein span at residues 7–27 (FFLKIFAILILLGCSVTAYII). At 28–785 (YHYSHDLPDY…GISDQSQEIY (758 aa)) the chain is on the periplasmic side. Residues 49–220 (TRIYSRDGKL…SELNPDKNYS (172 aa)) are transglycosylase. The Proton donor; for transglycosylase activity role is filled by Glu87. The segment at 398-711 (DVIVVEPIKD…SNVVLPIFID (314 aa)) is transpeptidase. The active-site Acyl-ester intermediate; for transpeptidase activity is Ser457.

The protein in the N-terminal section; belongs to the glycosyltransferase 51 family. This sequence in the C-terminal section; belongs to the transpeptidase family.

It is found in the cell inner membrane. The enzyme catalyses [GlcNAc-(1-&gt;4)-Mur2Ac(oyl-L-Ala-gamma-D-Glu-L-Lys-D-Ala-D-Ala)](n)-di-trans,octa-cis-undecaprenyl diphosphate + beta-D-GlcNAc-(1-&gt;4)-Mur2Ac(oyl-L-Ala-gamma-D-Glu-L-Lys-D-Ala-D-Ala)-di-trans,octa-cis-undecaprenyl diphosphate = [GlcNAc-(1-&gt;4)-Mur2Ac(oyl-L-Ala-gamma-D-Glu-L-Lys-D-Ala-D-Ala)](n+1)-di-trans,octa-cis-undecaprenyl diphosphate + di-trans,octa-cis-undecaprenyl diphosphate + H(+). It catalyses the reaction Preferential cleavage: (Ac)2-L-Lys-D-Ala-|-D-Ala. Also transpeptidation of peptidyl-alanyl moieties that are N-acyl substituents of D-alanine.. Its pathway is cell wall biogenesis; peptidoglycan biosynthesis. In terms of biological role, cell wall formation. Synthesis of cross-linked peptidoglycan from the lipid intermediates. The enzyme has a penicillin-insensitive transglycosylase N-terminal domain (formation of linear glycan strands) and a penicillin-sensitive transpeptidase C-terminal domain (cross-linking of the peptide subunits). The sequence is that of Penicillin-binding protein 1A (mrcA) from Rickettsia typhi (strain ATCC VR-144 / Wilmington).